The chain runs to 517 residues: MATLAPPPSKRQRREEIQRTQTQQDVTPLVATDLGSFKANFIDSDGNQMTDVVEINFADATEKNISNLLNTLLGRDREEFTPYRFRIHIPGKDLIIDQYPNDLLSLLQKHGVTNPFETTITLSAEPQAIFKVHAVSRLAHRIPGHGQPILSCQFSPVSSSRLATGSGDNTARIWDTDSGTPKFTLKGHTGWVLGVSWSPDGKYLATCSMDTTVRVWDPESGKQVNQEFRGHAKWVLALAWQPYHLWRDGTARLASASKDCTVRIWLVNTGRTEHVLSGHKGSVSCVKWGGTDLIYTGSHDRSVRVWDAVKGTLVHNFTAHGHWVNHIALSSDHVLRTAYHDHTKEVPGTEEERRAKAKERFEKAAKIKGKVAERLVSASDDFTMYLWDPTNNGSKPVARLLGHQNKVNHVQFSPDGTLIASAGWDNSTKLWNARDGKFIKNLRGHVAPVYQCAWSADSRLVVTGSKDCTLKVWNVRTGKLAMDLPGHEDEVYAVDWAADGELVASGGKDKAVRTWRN.

The disordered stretch occupies residues 1–25; it reads MATLAPPPSKRQRREEIQRTQTQQD. Residues 34-128 are ubiquitin-like (UBL) domain; the sequence is LGSFKANFID…TITLSAEPQA (95 aa). WD repeat units follow at residues 144 to 184, 187 to 226, 230 to 277, 278 to 316, 351 to 397, 402 to 441, 444 to 483, and 486 to 517; these read GHGQ…PKFT, GHTGWVLGVSWSPDGKYLATCSMDTTVRVWDPESGKQVNQ, GHAK…HVLS, GHKGSVSCVKWGGTDLIYTGSHDRSVRVWDAVKGTLVHN, EERR…SKPV, GHQNKVNHVQFSPDGTLIASAGWDNSTKLWNARDGKFIKN, GHVAPVYQCAWSADSRLVVTGSKDCTLKVWNVRTGKLAMD, and GHEDEVYAVDWAADGELVASGGKDKAVRTWRN.

It belongs to the NLE1/RSA4 family. In terms of assembly, associates with the pre-60S ribosomal particle. Interacts (via WD repeats) with uL18. Interacts (via UBL domain) with MDN1 (via VWFA/MIDAS domain). Interacts (via WD repeats) with NSA2.

The protein resides in the nucleus. Its subcellular location is the nucleolus. Functionally, involved in ribosome biogenesis. Required for processing and efficient intra-nuclear transport of pre-60S ribosomal subunits. Interacts with the AAA-ATPase Midasin, which is essential for the ATP-dependent dissociation of a group of nonribosomal factors from the pre-60S particle. The polypeptide is Ribosome assembly protein 4 (Chaetomium thermophilum (strain DSM 1495 / CBS 144.50 / IMI 039719) (Thermochaetoides thermophila)).